A 126-amino-acid polypeptide reads, in one-letter code: Large ribosomal subunit protein bL20 (126 aa).

This sequence belongs to the bacterial ribosomal protein bL20 family.

In terms of biological role, binds directly to 23S ribosomal RNA and is necessary for the in vitro assembly process of the 50S ribosomal subunit. It is not involved in the protein synthesizing functions of that subunit. The sequence is that of Large ribosomal subunit protein bL20 from Nocardia farcinica (strain IFM 10152).